We begin with the raw amino-acid sequence, 377 residues long: Cytochrome b (377 aa).

A run of 4 helical transmembrane segments spans residues W36–M56, W80–A102, V115–I135, and F181–I201. Heme b-binding residues include H86 and H100. The heme b site is built by H185 and H199. H204 is a binding site for a ubiquinone. The next 4 membrane-spanning stretches (helical) occupy residues Y227–F247, L291–S311, L326–V346, and L354–I374.

This sequence belongs to the cytochrome b family. In terms of assembly, the main subunits of complex b-c1 are: cytochrome b, cytochrome c1 and the Rieske protein. Heme b is required as a cofactor.

Its subcellular location is the mitochondrion inner membrane. Functionally, component of the ubiquinol-cytochrome c reductase complex (complex III or cytochrome b-c1 complex) that is part of the mitochondrial respiratory chain. The b-c1 complex mediates electron transfer from ubiquinol to cytochrome c. Contributes to the generation of a proton gradient across the mitochondrial membrane that is then used for ATP synthesis. This chain is Cytochrome b (mt:Cyt-b), found in Myzostoma seymourcollegiorum (Polychaete worm).